The primary structure comprises 367 residues: Large ribosomal subunit protein mL38 (367 aa).

Residues 1–29 constitute a mitochondrion transit peptide; it reads MLRRSIHTTKILQKPNATSHIWSDFTTRP.

It belongs to the phosphatidylethanolamine-binding protein family. Mitochondrion-specific ribosomal protein mL38 subfamily. In terms of assembly, component of the mitochondrial large ribosomal subunit (mt-LSU). Mature yeast 74S mitochondrial ribosomes consist of a small (37S) and a large (54S) subunit. The 37S small subunit contains a 15S ribosomal RNA (15S mt-rRNA) and 34 different proteins. The 54S large subunit contains a 21S rRNA (21S mt-rRNA) and 46 different proteins.

The protein localises to the mitochondrion. In terms of biological role, component of the mitochondrial ribosome (mitoribosome), a dedicated translation machinery responsible for the synthesis of mitochondrial genome-encoded proteins, including at least some of the essential transmembrane subunits of the mitochondrial respiratory chain. The mitoribosomes are attached to the mitochondrial inner membrane and translation products are cotranslationally integrated into the membrane. In Saccharomyces cerevisiae (strain ATCC 204508 / S288c) (Baker's yeast), this protein is Large ribosomal subunit protein mL38 (MRPL35).